The sequence spans 296 residues: Prostate androgen-regulated mucin-like protein 1 homolog (296 aa).

The signal sequence occupies residues 1–20 (MVCKALITLCIFAAGLRVQG). The Extracellular portion of the chain corresponds to 21–244 (SPTPTLLPVS…EVENALSSGS (224 aa)). Residues N62, N96, and N108 are each glycosylated (N-linked (GlcNAc...) asparagine). The segment at 73–220 (LTSQLPTHPR…SPQDTEPGKV (148 aa)) is disordered. The span at 80-96 (HPREEAVTSPPLKREVN) shows a compositional bias: basic and acidic residues. The span at 97–111 (STDSSPTGFSSNSSG) shows a compositional bias: low complexity. Positions 125 to 145 (SPETSVPATGSQSPTLLFSQG) are enriched in polar residues. Low complexity-rich tracts occupy residues 146-175 (PTSA…TVNN) and 195-205 (SHTPTSHVTEP). N-linked (GlcNAc...) asparagine glycosylation occurs at N168. Over residues 206–217 (VPKEKSPQDTEP) the composition is skewed to basic and acidic residues. Residues 245–265 (IAAITVTVIAVVLLVFGAAAY) traverse the membrane as a helical segment. The Cytoplasmic portion of the chain corresponds to 266-296 (LKIRHSSYGRLLDDHDYGSWGNYNNPLYDDS). S284 bears the Phosphoserine mark.

Belongs to the PARM family. Highly N-glycosylated and O-glycosylated. In terms of tissue distribution, expressed in prostate. Detected in other organs at low levels, these include the heart and various tissues of the urogenital tract. Not detected in mammary gland.

Its subcellular location is the cell membrane. It localises to the golgi apparatus membrane. It is found in the endosome membrane. In terms of biological role, may regulate TLP1 expression and telomerase activity, thus enabling certain prostatic cells to resist apoptosis. The sequence is that of Prostate androgen-regulated mucin-like protein 1 homolog (Parm1) from Rattus norvegicus (Rat).